Reading from the N-terminus, the 996-residue chain is UPF0182 protein CE0802 (996 aa).

Transmembrane regions (helical) follow at residues 19-39 (VTWI…TVGF), 63-83 (IILF…AGYF), 115-135 (ILII…QRSW), 176-196 (STLL…LGGI), 212-234 (GARA…TYWL), 262-282 (KIIL…AIFL), and 290-310 (LAVV…PLML). Residues 920 to 950 (VPDVNATEDADATTDGEDETPAAPAAPAGSE) are disordered. Residues 925-939 (ATEDADATTDGEDET) are compositionally biased toward acidic residues. Residues 940-950 (PAAPAAPAGSE) show a composition bias toward low complexity.

It belongs to the UPF0182 family.

The protein localises to the cell membrane. This chain is UPF0182 protein CE0802, found in Corynebacterium efficiens (strain DSM 44549 / YS-314 / AJ 12310 / JCM 11189 / NBRC 100395).